Consider the following 332-residue polypeptide: Cyclin-D1-binding protein 1 (332 aa).

Alanine 2 carries the N-acetylalanine modification. 2 interaction with TCF3 regions span residues 2–184 (ASAT…VDFV) and 150–332 (ISYN…CLLD). Interaction with RPLP0 regions lie at residues 2 to 190 (ASAT…AHEE) and 240 to 332 (LIIP…CLLD). The required for interaction with CCND1 stretch occupies residues 2-208 (ASATAPAAAA…DPYSGLLNDT (207 aa)).

This sequence belongs to the CCNDBP1 family. As to quaternary structure, interacts with CCND1 and GRAP2. May also interact with COPS5, RPLP0, SIRT6, SYF2 and TCF3. Post-translationally, phosphorylated.

The protein resides in the cytoplasm. It is found in the nucleus. Its function is as follows. May negatively regulate cell cycle progression. May act at least in part via inhibition of the cyclin-D1/CDK4 complex, thereby preventing phosphorylation of RB1 and blocking E2F-dependent transcription. The polypeptide is Cyclin-D1-binding protein 1 (CCNDBP1) (Macaca fascicularis (Crab-eating macaque)).